A 236-amino-acid chain; its full sequence is 2,3,4,5-tetrahydropyridine-2,6-dicarboxylate N-acetyltransferase (236 aa).

Belongs to the transferase hexapeptide repeat family. DapH subfamily.

The catalysed reaction is (S)-2,3,4,5-tetrahydrodipicolinate + acetyl-CoA + H2O = L-2-acetamido-6-oxoheptanedioate + CoA. The protein operates within amino-acid biosynthesis; L-lysine biosynthesis via DAP pathway; LL-2,6-diaminopimelate from (S)-tetrahydrodipicolinate (acetylase route): step 1/3. Catalyzes the transfer of an acetyl group from acetyl-CoA to tetrahydrodipicolinate. The chain is 2,3,4,5-tetrahydropyridine-2,6-dicarboxylate N-acetyltransferase from Lactiplantibacillus plantarum (strain ATCC BAA-793 / NCIMB 8826 / WCFS1) (Lactobacillus plantarum).